A 298-amino-acid chain; its full sequence is Aspartate carbamoyltransferase catalytic subunit (298 aa).

The carbamoyl phosphate site is built by Arg-50 and Thr-51. Lys-79 lines the L-aspartate pocket. The carbamoyl phosphate site is built by Arg-100, His-128, and Gln-131. L-aspartate contacts are provided by Arg-161 and Arg-220. Positions 259 and 260 each coordinate carbamoyl phosphate.

Belongs to the aspartate/ornithine carbamoyltransferase superfamily. ATCase family. Heterooligomer of catalytic and regulatory chains.

It catalyses the reaction carbamoyl phosphate + L-aspartate = N-carbamoyl-L-aspartate + phosphate + H(+). Its pathway is pyrimidine metabolism; UMP biosynthesis via de novo pathway; (S)-dihydroorotate from bicarbonate: step 2/3. In terms of biological role, catalyzes the condensation of carbamoyl phosphate and aspartate to form carbamoyl aspartate and inorganic phosphate, the committed step in the de novo pyrimidine nucleotide biosynthesis pathway. This Sulfurisphaera tokodaii (strain DSM 16993 / JCM 10545 / NBRC 100140 / 7) (Sulfolobus tokodaii) protein is Aspartate carbamoyltransferase catalytic subunit.